Reading from the N-terminus, the 815-residue chain is Leucine--tRNA ligase (815 aa).

Positions 42–52 (PYPSGRLHMGH) match the 'HIGH' region motif. The 'KMSKS' region motif lies at 574–578 (KMSKS). Lys-577 lines the ATP pocket.

This sequence belongs to the class-I aminoacyl-tRNA synthetase family.

It localises to the cytoplasm. The enzyme catalyses tRNA(Leu) + L-leucine + ATP = L-leucyl-tRNA(Leu) + AMP + diphosphate. This Marinomonas sp. (strain MWYL1) protein is Leucine--tRNA ligase.